The chain runs to 127 residues: Aspartate 1-decarboxylase (127 aa).

The active-site Schiff-base intermediate with substrate; via pyruvic acid is the S25. Position 25 is a pyruvic acid (Ser) (S25). Substrate is bound at residue T57. Y58 functions as the Proton donor in the catalytic mechanism. 73–75 (GAA) contributes to the substrate binding site.

Belongs to the PanD family. As to quaternary structure, heterooctamer of four alpha and four beta subunits. Pyruvate serves as cofactor. Is synthesized initially as an inactive proenzyme, which is activated by self-cleavage at a specific serine bond to produce a beta-subunit with a hydroxyl group at its C-terminus and an alpha-subunit with a pyruvoyl group at its N-terminus.

Its subcellular location is the cytoplasm. The catalysed reaction is L-aspartate + H(+) = beta-alanine + CO2. It functions in the pathway cofactor biosynthesis; (R)-pantothenate biosynthesis; beta-alanine from L-aspartate: step 1/1. Its function is as follows. Catalyzes the pyruvoyl-dependent decarboxylation of aspartate to produce beta-alanine. The sequence is that of Aspartate 1-decarboxylase from Aliarcobacter butzleri (strain RM4018) (Arcobacter butzleri).